We begin with the raw amino-acid sequence, 196 residues long: APGW-amide-related neuropeptide (196 aa).

The N-terminal stretch at 1–22 is a signal peptide; the sequence is METLNIFLVIFSLLGTIIIASS. The propeptide occupies 23-48; the sequence is SDESSERKKRDLDTIDDTNNDFLTAD. A Tryptophan amide modification is found at Trp54. Positions 58–68 are excised as a propeptide; sequence SFDDDILNNLD. A Tryptophan amide modification is found at Trp74. The propeptide occupies 78-88; the sequence is SDMLFDSEEIE. Residue Trp94 is modified to Tryptophan amide. Residues 98–105 constitute a propeptide that is removed on maturation; it reads SSSLYDDE. Trp111 carries the post-translational modification Tryptophan amide. Positions 115–129 are excised as a propeptide; the sequence is SSALLDDLSLYNSIV. At Trp135 the chain carries Tryptophan amide. The propeptide occupies 139–146; sequence SDTFKVDI. Residues Trp151 and Trp158 each carry the tryptophan amide modification. The propeptide occupies 162-196; that stretch reads SGPNMCMDFQDEILQLYKLLNEAEKLHSECEALNI.

In terms of tissue distribution, expressed in cerebral, pedal and visceral ganglia. TPGW-amide is found in pedal and cerebral ganglia and in shell adductor muscle (at protein level). RPGW-amide and KPGW-amide are found in pedal retractor muscle, ABRM and shell adductor muscle (at protein level).

RPGW-amide, KPGW-amide and TPGW-amide tetrapeptides are involved in control of muscle contraction and may function as neurotransmitters. These peptides increase tension of the pedal retractor muscle and, in conjunction with FMRF-amide, increase peak tension of the anterior byssus retractor muscle (ABRM). The chain is APGW-amide-related neuropeptide from Mytilus edulis (Blue mussel).